Reading from the N-terminus, the 197-residue chain is Proteasome subunit beta 1 (197 aa).

A propeptide spans 1–6 (MNRKTG) (removed in mature form; by autocatalysis). Thr-7 acts as the Nucleophile in catalysis.

This sequence belongs to the peptidase T1B family. In terms of assembly, the 20S proteasome core is composed of 14 alpha and 14 beta subunits that assemble into four stacked heptameric rings, resulting in a barrel-shaped structure. The two inner rings, each composed of seven catalytic beta subunits, are sandwiched by two outer rings, each composed of seven alpha subunits. The catalytic chamber with the active sites is on the inside of the barrel. Has a gated structure, the ends of the cylinder being occluded by the N-termini of the alpha-subunits. Is capped at one or both ends by the proteasome regulatory ATPase, PAN.

It localises to the cytoplasm. The catalysed reaction is Cleavage of peptide bonds with very broad specificity.. The formation of the proteasomal ATPase PAN-20S proteasome complex, via the docking of the C-termini of PAN into the intersubunit pockets in the alpha-rings, triggers opening of the gate for substrate entry. Interconversion between the open-gate and close-gate conformations leads to a dynamic regulation of the 20S proteasome proteolysis activity. Functionally, component of the proteasome core, a large protease complex with broad specificity involved in protein degradation. This is Proteasome subunit beta 1 from Pyrococcus abyssi (strain GE5 / Orsay).